Reading from the N-terminus, the 307-residue chain is NAD(+) hydrolase TcpC (307 aa).

A helical membrane pass occupies residues 22-42; that stretch reads YNILFFIFLSIAIPFLLFLAW. A TIR domain is found at 169–303; the sequence is THYDFFISHA…EIARELAEIA (135 aa). NAD(+)-binding positions include 178 to 179 and glutamate 208; that span reads AK. Residue glutamate 244 is part of the active site.

In terms of assembly, interacts with host MYD88. Interacts with host TLR4.

Its subcellular location is the secreted. The protein resides in the membrane. It catalyses the reaction NAD(+) + H2O = ADP-D-ribose + nicotinamide + H(+). It carries out the reaction NADP(+) + H2O = ADP-D-ribose 2'-phosphate + nicotinamide + H(+). Virulence factor that suppresses host Toll-like receptor (TLR)-mediated cytokine production upon infection, thereby increasing bacterial burden in the urinary tract and promoting renal tissue damage. Acts as a NAD(+) hydrolase (NADase) by catalyzing cleavage of NAD(+) into ADP-D-ribose (ADPR) and nicotinamide. Also able to hydrolyze NADP(+), but not other NAD(+)-related molecules. The protein is NAD(+) hydrolase TcpC of Escherichia coli O6:H1 (strain CFT073 / ATCC 700928 / UPEC).